We begin with the raw amino-acid sequence, 357 residues long: Probable dual-specificity RNA methyltransferase RlmN (357 aa).

Glutamate 95 acts as the Proton acceptor in catalysis. The region spanning 105 to 343 (KKSSYTLCLS…VSIREERGSD (239 aa)) is the Radical SAM core domain. Residues cysteine 112 and cysteine 348 are joined by a disulfide bond. [4Fe-4S] cluster is bound by residues cysteine 119, cysteine 123, and cysteine 126. Residues 174 to 175 (GE), serine 206, 229 to 231 (SLH), and asparagine 305 each bind S-adenosyl-L-methionine. Cysteine 348 functions as the S-methylcysteine intermediate in the catalytic mechanism.

It belongs to the radical SAM superfamily. RlmN family. [4Fe-4S] cluster serves as cofactor.

The protein localises to the cytoplasm. It carries out the reaction adenosine(2503) in 23S rRNA + 2 reduced [2Fe-2S]-[ferredoxin] + 2 S-adenosyl-L-methionine = 2-methyladenosine(2503) in 23S rRNA + 5'-deoxyadenosine + L-methionine + 2 oxidized [2Fe-2S]-[ferredoxin] + S-adenosyl-L-homocysteine. The enzyme catalyses adenosine(37) in tRNA + 2 reduced [2Fe-2S]-[ferredoxin] + 2 S-adenosyl-L-methionine = 2-methyladenosine(37) in tRNA + 5'-deoxyadenosine + L-methionine + 2 oxidized [2Fe-2S]-[ferredoxin] + S-adenosyl-L-homocysteine. Specifically methylates position 2 of adenine 2503 in 23S rRNA and position 2 of adenine 37 in tRNAs. This is Probable dual-specificity RNA methyltransferase RlmN from Syntrophomonas wolfei subsp. wolfei (strain DSM 2245B / Goettingen).